The following is a 1558-amino-acid chain: ABC transporter NFT1 (1558 aa).

Topologically, residues 1 to 29 are extracellular; it reads MIKNGTCPYWERDDLSECARREYIEFKFP. A glycan (N-linked (GlcNAc...) asparagine) is linked at N4. Residues 30–50 traverse the membrane as a helical segment; the sequence is LFILLTGMIYAFCKVFRAFYL. Residues 51–103 lie on the Cytoplasmic side of the membrane; sequence RGKNHTNEAPEFEEQGNGNHEYARFSVLRLKSAWESRSFCNVNNRSTFDKFKK. Residues 104-124 form a helical membrane-spanning segment; the sequence is FIEGAFIVLQLTIHLYILSSM. At 125 to 130 the chain is on the extracellular side; the sequence is PMDNKK. A helical transmembrane segment spans residues 131 to 151; the sequence is FFHQGFLVQMFLWILLLVVIT. Over 152 to 169 the chain is Cytoplasmic; it reads LRLISASQSFRWVLACKR. A helical transmembrane segment spans residues 170-190; sequence DLWAVSFYSYASLFTLSILPL. Over 191 to 201 the chain is Extracellular; the sequence is RSVFIGKIKDK. The helical transmembrane segment at 202-222 threads the bilayer; that stretch reads IMVKYIISETFIDLALLLLLS. Topologically, residues 223–302 are cytoplasmic; the sequence is TSSIEGTRYS…SSKKGRLLPN (80 aa). Residues 303–323 form a helical membrane-spanning segment; it reads IICYFKAVFISQLFLAFVSSF. The ABC transmembrane type-1 1 domain maps to 311 to 621; sequence FISQLFLAFV…IASTVSLLIQ (311 aa). At 324–351 the chain is on the extracellular side; the sequence is LNFVPSLLMPRILSYVNDPKSKSWNLVS. A helical membrane pass occupies residues 352-374; that stretch reads LYVSSMLVSKIIATTCRGQGLFL. Topologically, residues 375–449 are cytoplasmic; the sequence is GEKGTMQLRT…VMSIDAFKVS (75 aa). The tract at residues 410–434 is disordered; the sequence is NASTSFEENPDSSEAEPRKKSSRKD. Residues 424–434 show a composition bias toward basic and acidic residues; the sequence is AEPRKKSSRKD. Residues 450–470 form a helical membrane-spanning segment; that stretch reads EAMNTFYLACEAVFMTVTALM. Over 471–481 the chain is Extracellular; sequence ILYSLLGWSAF. Residues 482–504 form a helical membrane-spanning segment; sequence AGTFALLAMIPLNFWCATFYGNY. Topologically, residues 505–558 are cytoplasmic; the sequence is QADQLILTDKRTSGISEALNSIRVIKLLAWENLFYQKIINVRDGEIRLLKKKAT. Residues 559–579 form a helical membrane-spanning segment; it reads IFFLNHLIWFFGPTLVSAITF. Residues 580-584 lie on the Extracellular side of the membrane; it reads SVFIK. The chain crosses the membrane as a helical span at residues 585-605; sequence FQNQTLTPTIAFTALSLFAIL. The Cytoplasmic portion of the chain corresponds to 606-953; it reads RTPMDQIAST…KFSAYKWLAD (348 aa). The ABC transporter 1 domain maps to 651–892; it reads FGFEDASMEW…NEFLRESINN (242 aa). Residue 686-693 coordinates ATP; sequence GPTGSGKS. A compositionally biased stretch (polar residues) spans 892 to 901; that stretch reads NDSKNTTHNQ. Residues 892-926 are disordered; that stretch reads NDSKNTTHNQIDLKRSTTSKKTKNGDPEGGNSQDE. A helical transmembrane segment spans residues 954 to 974; the sequence is YFGGLGVVFVFTSSSILIHGI. The region spanning 961-1251 is the ABC transmembrane type-1 2 domain; sequence VFVFTSSSIL…IIKVFSSVEL (291 aa). The Extracellular segment spans residues 975 to 1013; sequence TLSQGFWLRYWLDTGSSGSKSTWLYRIVEGHSNIYFLLT. The chain crosses the membrane as a helical span at residues 1014–1034; the sequence is YIIIGLVSSFLTSGKVWIAII. Topologically, residues 1035-1082 are cytoplasmic; the sequence is SGTNVTKKIFAKLLSSILYAKLRFHNVTPTGRIMNRFSKDMDIIDQQL. Residues 1083-1105 form a helical membrane-spanning segment; the sequence is IPNFEGLSYSVVVCLWIILLIGY. Residues 1106 to 1109 are Extracellular-facing; it reads VTPQ. The chain crosses the membrane as a helical span at residues 1110 to 1132; sequence FLLFAIPLCALYYTVCTLYLRAS. The Cytoplasmic portion of the chain corresponds to 1133-1199; the sequence is RELKRIDNIN…ATEWITYRVD (67 aa). A helical transmembrane segment spans residues 1200–1220; that stretch reads IIGTLVLFSSSVMIIMKASYL. Residues 1221–1222 lie on the Extracellular side of the membrane; sequence DA. Residues 1223–1243 traverse the membrane as a helical segment; it reads GLAGILLSNAFSFTETAQWII. Residues 1244–1558 are Cytoplasmic-facing; it reads KVFSSVELLM…LAKVSFDNKR (315 aa). Residues 1285–1538 form the ABC transporter 2 domain; that stretch reads VELKNLSLRY…RNTIFYRLCR (254 aa). Position 1319–1326 (1319–1326) interacts with ATP; sequence GRTGAGKS.

This sequence belongs to the ABC transporter superfamily. ABCC family. Conjugate transporter (TC 3.A.1.208) subfamily.

The protein localises to the membrane. The protein is ABC transporter NFT1 (NFT1) of Saccharomyces cerevisiae (Baker's yeast).